Here is a 157-residue protein sequence, read N- to C-terminus: Endoribonuclease YbeY (157 aa).

Zn(2+)-binding residues include His-114, His-118, and His-124.

Belongs to the endoribonuclease YbeY family. It depends on Zn(2+) as a cofactor.

Its subcellular location is the cytoplasm. Single strand-specific metallo-endoribonuclease involved in late-stage 70S ribosome quality control and in maturation of the 3' terminus of the 16S rRNA. The chain is Endoribonuclease YbeY from Salmonella paratyphi A (strain AKU_12601).